A 296-amino-acid polypeptide reads, in one-letter code: Pantothenate synthetase (296 aa).

30-37 provides a ligand contact to ATP; that stretch reads MGNLHEGH. H37 functions as the Proton donor in the catalytic mechanism. Q61 contacts (R)-pantoate. A beta-alanine-binding site is contributed by Q61. 149 to 152 is an ATP binding site; the sequence is GEKD. Q155 contacts (R)-pantoate. ATP contacts are provided by residues V178 and 186–189; that span reads MSSR.

It belongs to the pantothenate synthetase family. As to quaternary structure, homodimer.

Its subcellular location is the cytoplasm. The catalysed reaction is (R)-pantoate + beta-alanine + ATP = (R)-pantothenate + AMP + diphosphate + H(+). The protein operates within cofactor biosynthesis; (R)-pantothenate biosynthesis; (R)-pantothenate from (R)-pantoate and beta-alanine: step 1/1. Catalyzes the condensation of pantoate with beta-alanine in an ATP-dependent reaction via a pantoyl-adenylate intermediate. This is Pantothenate synthetase from Vibrio atlanticus (strain LGP32) (Vibrio splendidus (strain Mel32)).